A 209-amino-acid chain; its full sequence is RNA chaperone ProQ (209 aa).

The disordered stretch occupies residues 101–155; that stretch reads LAESKAKVQARRKEQAQKAREEGKAKAKPAANKKPQQPRRTNKPKVQKPTKPVET. Residues 111–125 are compositionally biased toward basic and acidic residues; sequence RRKEQAQKAREEGKA. Basic residues predominate over residues 136–148; it reads QQPRRTNKPKVQK.

The protein belongs to the ProQ family.

Its subcellular location is the cytoplasm. RNA chaperone with significant RNA binding, RNA strand exchange and RNA duplexing activities. The polypeptide is RNA chaperone ProQ (Vibrio parahaemolyticus serotype O3:K6 (strain RIMD 2210633)).